The primary structure comprises 290 residues: Pyridoxal 5'-phosphate synthase subunit PdxS (290 aa).

Asp22 contributes to the D-ribose 5-phosphate binding site. The Schiff-base intermediate with D-ribose 5-phosphate role is filled by Lys79. Gly151 is a D-ribose 5-phosphate binding site. Position 163 (Arg163) interacts with D-glyceraldehyde 3-phosphate. D-ribose 5-phosphate contacts are provided by residues Gly212 and 233-234; that span reads GS.

It belongs to the PdxS/SNZ family. As to quaternary structure, in the presence of PdxT, forms a dodecamer of heterodimers.

The catalysed reaction is aldehydo-D-ribose 5-phosphate + D-glyceraldehyde 3-phosphate + L-glutamine = pyridoxal 5'-phosphate + L-glutamate + phosphate + 3 H2O + H(+). The protein operates within cofactor biosynthesis; pyridoxal 5'-phosphate biosynthesis. In terms of biological role, catalyzes the formation of pyridoxal 5'-phosphate from ribose 5-phosphate (RBP), glyceraldehyde 3-phosphate (G3P) and ammonia. The ammonia is provided by the PdxT subunit. Can also use ribulose 5-phosphate and dihydroxyacetone phosphate as substrates, resulting from enzyme-catalyzed isomerization of RBP and G3P, respectively. The protein is Pyridoxal 5'-phosphate synthase subunit PdxS of Clostridium botulinum (strain Langeland / NCTC 10281 / Type F).